The chain runs to 149 residues: uncharacterized protein (149 aa).

This is an uncharacterized protein from Acanthamoeba polyphaga (Amoeba).